A 578-amino-acid chain; its full sequence is E3 ubiquitin-protein ligase Praja-1 (578 aa).

Positions 1-298 are disordered; that stretch reads MSHQERIASQ…KVPRRRRTMA (298 aa). Basic and acidic residues-rich tracts occupy residues 57-67 and 107-116; these read DYSRYPPREYR and KFKDDPEKGA. The span at 151–163 shows a compositional bias: polar residues; sequence SKQNGSSASQISS. T231 carries the post-translational modification Phosphothreonine. Composition is skewed to basic and acidic residues over residues 243 to 264 and 273 to 290; these read RWRD…RGRG and RYAE…ADKV. S317 and S319 each carry phosphoserine. A disordered region spans residues 332–397; the sequence is RSREQPQSSS…QASLEEGEIP (66 aa). Residues 359-373 are compositionally biased toward low complexity; sequence AGAGSLASAGSNGSG. Positions 377 to 395 are enriched in acidic residues; sequence EVQDPSLQEEEQASLEEGE. Residues 530 to 571 form an RING-type zinc finger; the sequence is CPICCSEYVKGEVATELPCHHYFHKPCVSIWLQKSGTCPVCR.

As to quaternary structure, binds ubiquitin-conjugating enzymes (E2s). Binds, in vitro and in vivo, the MAGE conserved domain of MAGED1. Binds weakly Necdin, in vitro. Interacts with UBE2D2. In terms of processing, substrate for E2-dependent ubiquitination. Expressed in brain, liver, kidney. Highest levels in brain where it is found in many regions including cortical and subcortical areas and in neurons of the amygdala. Weak expression also found in testis. Also expressed in developing embryo.

The enzyme catalyses S-ubiquitinyl-[E2 ubiquitin-conjugating enzyme]-L-cysteine + [acceptor protein]-L-lysine = [E2 ubiquitin-conjugating enzyme]-L-cysteine + N(6)-ubiquitinyl-[acceptor protein]-L-lysine.. Has E2-dependent E3 ubiquitin-protein ligase activity. Ubiquitinates MAGED1 antigen leading to its subsequent degradation by proteasome. May be involved in protein sorting. The chain is E3 ubiquitin-protein ligase Praja-1 (Pja1) from Mus musculus (Mouse).